The chain runs to 34 residues: Turripeptide Pal9a (34 aa).

3 disulfide bridges follow: C3/C17, C8/C19, and C13/C30. At Q34 the chain carries Glutamine amide.

As to expression, expressed by the venom duct.

It is found in the secreted. The chain is Turripeptide Pal9a from Polystira albida (White giant-turris).